Here is a 378-residue protein sequence, read N- to C-terminus: Glutamate 5-kinase (378 aa).

Lys15 contributes to the ATP binding site. Substrate-binding residues include Ser56, Asp143, and Asn155. 175 to 176 (SD) is a binding site for ATP. One can recognise a PUA domain in the interval 281 to 358 (KGTLTIDAGA…PDVAVILGIS (78 aa)).

It belongs to the glutamate 5-kinase family.

Its subcellular location is the cytoplasm. The catalysed reaction is L-glutamate + ATP = L-glutamyl 5-phosphate + ADP. Its pathway is amino-acid biosynthesis; L-proline biosynthesis; L-glutamate 5-semialdehyde from L-glutamate: step 1/2. Catalyzes the transfer of a phosphate group to glutamate to form L-glutamate 5-phosphate. The protein is Glutamate 5-kinase of Bradyrhizobium sp. (strain BTAi1 / ATCC BAA-1182).